A 33-amino-acid chain; its full sequence is Alpha-amanitin proprotein (33 aa).

Positions 1–10 (MSDINATRLP) are excised as a propeptide. I11 is modified ((3R,4R)-4,5-dihydroxyisoleucine; in form alpha-amanitin). I11 carries the (3R,4S)-4-hydroxyisoleucine; in form gamma-amanitin modification. A cross-link (cyclopeptide (Ile-Pro)) is located at residues 11–18 (IWGIGCNP). Positions 12–16 (WGIGC) form a cross-link, 2'-cysteinyl-6'-hydroxytryptophan sulfoxide (Trp-Cys). P18 carries the post-translational modification 4-hydroxyproline. The propeptide occupies 19–33 (CVGDEVTALLTRGEA).

It belongs to the MSDIN fungal toxin family. In terms of processing, processed by the macrocyclase-peptidase enzyme POPB to yield a toxic cyclic decapeptide. POPB first removes 10 residues from the N-terminus. Conformational trapping of the remaining peptide forces the enzyme to release this intermediate rather than proceed to macrocyclization. The enzyme rebinds the remaining peptide in a different conformation and catalyzes macrocyclization of the N-terminal 8 residues.

In terms of biological role, major toxin belonging to the bicyclic octapeptides amatoxins that acts by binding non-competitively to RNA polymerase II and greatly slowing the elongation of transcripts from target promoters. The protein is Alpha-amanitin proprotein of Amanita fuligineoides.